We begin with the raw amino-acid sequence, 242 residues long: Phosphoribosylaminoimidazole-succinocarboxamide synthase (242 aa).

It belongs to the SAICAR synthetase family.

It carries out the reaction 5-amino-1-(5-phospho-D-ribosyl)imidazole-4-carboxylate + L-aspartate + ATP = (2S)-2-[5-amino-1-(5-phospho-beta-D-ribosyl)imidazole-4-carboxamido]succinate + ADP + phosphate + 2 H(+). It functions in the pathway purine metabolism; IMP biosynthesis via de novo pathway; 5-amino-1-(5-phospho-D-ribosyl)imidazole-4-carboxamide from 5-amino-1-(5-phospho-D-ribosyl)imidazole-4-carboxylate: step 1/2. The chain is Phosphoribosylaminoimidazole-succinocarboxamide synthase from Ehrlichia chaffeensis (strain ATCC CRL-10679 / Arkansas).